We begin with the raw amino-acid sequence, 161 residues long: Phosphopantetheine adenylyltransferase (161 aa).

Ser11 provides a ligand contact to substrate. ATP-binding positions include 11–12 and His19; that span reads SF. 3 residues coordinate substrate: Lys43, Leu75, and Arg89. ATP contacts are provided by residues 90-92, Glu100, and 125-131; these read GLR and YSYLSSS.

It belongs to the bacterial CoaD family. In terms of assembly, homohexamer. It depends on Mg(2+) as a cofactor.

It is found in the cytoplasm. It carries out the reaction (R)-4'-phosphopantetheine + ATP + H(+) = 3'-dephospho-CoA + diphosphate. The protein operates within cofactor biosynthesis; coenzyme A biosynthesis; CoA from (R)-pantothenate: step 4/5. Functionally, reversibly transfers an adenylyl group from ATP to 4'-phosphopantetheine, yielding dephospho-CoA (dPCoA) and pyrophosphate. The polypeptide is Phosphopantetheine adenylyltransferase (Geotalea daltonii (strain DSM 22248 / JCM 15807 / FRC-32) (Geobacter daltonii)).